Reading from the N-terminus, the 625-residue chain is tRNA uridine 5-carboxymethylaminomethyl modification enzyme MnmG (625 aa).

FAD-binding positions include 11–16 (GAGHAG), Val-123, and Ser-178. Residue 271-285 (GPRYCPSIETKIVTF) participates in NAD(+) binding. Gln-368 contacts FAD.

It belongs to the MnmG family. Homodimer. Heterotetramer of two MnmE and two MnmG subunits. It depends on FAD as a cofactor.

It is found in the cytoplasm. Its function is as follows. NAD-binding protein involved in the addition of a carboxymethylaminomethyl (cmnm) group at the wobble position (U34) of certain tRNAs, forming tRNA-cmnm(5)s(2)U34. The polypeptide is tRNA uridine 5-carboxymethylaminomethyl modification enzyme MnmG (Bacteroides fragilis (strain YCH46)).